The chain runs to 222 residues: Formimidoylglutamase (222 aa).

Residues His34, Asp59, His61, Asp63, Asp150, and Asp152 each coordinate Mn(2+).

The protein belongs to the arginase family. Mn(2+) is required as a cofactor.

It carries out the reaction N-formimidoyl-L-glutamate + H2O = formamide + L-glutamate. It participates in amino-acid degradation; L-histidine degradation into L-glutamate; L-glutamate from N-formimidoyl-L-glutamate (hydrolase route): step 1/1. Functionally, catalyzes the conversion of N-formimidoyl-L-glutamate to L-glutamate and formamide. The protein is Formimidoylglutamase (hutG) of Klebsiella aerogenes (Enterobacter aerogenes).